An 87-amino-acid chain; its full sequence is Large ribosomal subunit protein bL27 (87 aa).

A disordered region spans residues 1 to 21 (MAHKKAGGSSRNGRDSESKRL).

Belongs to the bacterial ribosomal protein bL27 family.

This Aromatoleum aromaticum (strain DSM 19018 / LMG 30748 / EbN1) (Azoarcus sp. (strain EbN1)) protein is Large ribosomal subunit protein bL27.